A 97-amino-acid chain; its full sequence is Mapk-regulated corepressor-interacting protein 1 (97 aa).

Disordered stretches follow at residues 1-29 and 72-97; these read MTSSPVSRVVYNGKRPASNTRSPSSNEIF and SNSLKSFKPIDLNDLKRRTVQDPKKS. The span at 17-28 shows a compositional bias: polar residues; it reads ASNTRSPSSNEI. The segment covering 82–97 has biased composition (basic and acidic residues); it reads DLNDLKRRTVQDPKKS.

The protein belongs to the MCRIP family.

It is found in the nucleus. The protein resides in the cytoplasm. Its subcellular location is the stress granule. Functionally, may play a role in the regulation of the epithelial-mesenchymal transition. The protein is Mapk-regulated corepressor-interacting protein 1 (Mcrip1) of Xenopus tropicalis (Western clawed frog).